The primary structure comprises 194 residues: Thymidylate kinase (194 aa).

7–14 is an ATP binding site; it reads GIDTAGKS.

Belongs to the thymidylate kinase family.

The catalysed reaction is dTMP + ATP = dTDP + ADP. Its function is as follows. Phosphorylation of dTMP to form dTDP in both de novo and salvage pathways of dTTP synthesis. The chain is Thymidylate kinase from Nautilia profundicola (strain ATCC BAA-1463 / DSM 18972 / AmH).